Reading from the N-terminus, the 379-residue chain is Adenylosuccinate synthetase (379 aa).

GTP contacts are provided by residues 11–17 (GDEGKGK) and 39–41 (GHT). Catalysis depends on aspartate 12, which acts as the Proton acceptor. 2 residues coordinate Mg(2+): aspartate 12 and glycine 39. IMP is bound by residues 12–15 (DEGK), 37–40 (NAGH), threonine 127, arginine 141, glutamine 223, threonine 238, and arginine 302. The Proton donor role is filled by histidine 40. 298-304 (TTTGRGR) provides a ligand contact to substrate. Residues arginine 304 and 330–332 (KLD) each bind GTP.

It belongs to the adenylosuccinate synthetase family. As to quaternary structure, homodimer. Mg(2+) is required as a cofactor.

The protein resides in the cytoplasm. It catalyses the reaction IMP + L-aspartate + GTP = N(6)-(1,2-dicarboxyethyl)-AMP + GDP + phosphate + 2 H(+). Its pathway is purine metabolism; AMP biosynthesis via de novo pathway; AMP from IMP: step 1/2. Its function is as follows. Plays an important role in the de novo pathway of purine nucleotide biosynthesis. Catalyzes the first committed step in the biosynthesis of AMP from IMP. This Methanosarcina mazei (strain ATCC BAA-159 / DSM 3647 / Goe1 / Go1 / JCM 11833 / OCM 88) (Methanosarcina frisia) protein is Adenylosuccinate synthetase.